The chain runs to 328 residues: Methionyl-tRNA formyltransferase (328 aa).

121–124 lines the (6S)-5,6,7,8-tetrahydrofolate pocket; sequence SLLP.

This sequence belongs to the Fmt family.

The enzyme catalyses L-methionyl-tRNA(fMet) + (6R)-10-formyltetrahydrofolate = N-formyl-L-methionyl-tRNA(fMet) + (6S)-5,6,7,8-tetrahydrofolate + H(+). Attaches a formyl group to the free amino group of methionyl-tRNA(fMet). The formyl group appears to play a dual role in the initiator identity of N-formylmethionyl-tRNA by promoting its recognition by IF2 and preventing the misappropriation of this tRNA by the elongation apparatus. The sequence is that of Methionyl-tRNA formyltransferase from Burkholderia thailandensis (strain ATCC 700388 / DSM 13276 / CCUG 48851 / CIP 106301 / E264).